We begin with the raw amino-acid sequence, 371 residues long: Alanine racemase (371 aa).

The active-site Proton acceptor; specific for D-alanine is K35. An N6-(pyridoxal phosphate)lysine modification is found at K35. R130 lines the substrate pocket. Y256 serves as the catalytic Proton acceptor; specific for L-alanine. M304 provides a ligand contact to substrate.

This sequence belongs to the alanine racemase family. Requires pyridoxal 5'-phosphate as cofactor.

It carries out the reaction L-alanine = D-alanine. It functions in the pathway amino-acid biosynthesis; D-alanine biosynthesis; D-alanine from L-alanine: step 1/1. Functionally, catalyzes the interconversion of L-alanine and D-alanine. May also act on other amino acids. This Verminephrobacter eiseniae (strain EF01-2) protein is Alanine racemase (alr).